Consider the following 652-residue polypeptide: Chaperone protein HtpG (652 aa).

The interval methionine 1 to arginine 348 is a; substrate-binding. Residues glutamate 349–arginine 565 form a b region. The c stretch occupies residues leucine 566 to aspartate 652.

It belongs to the heat shock protein 90 family. As to quaternary structure, homodimer.

The protein resides in the cytoplasm. Functionally, molecular chaperone. Has ATPase activity. In Alkalilimnicola ehrlichii (strain ATCC BAA-1101 / DSM 17681 / MLHE-1), this protein is Chaperone protein HtpG.